Here is a 189-residue protein sequence, read N- to C-terminus: Ion-translocating oxidoreductase complex subunit B (189 aa).

A hydrophobic region spans residues M1 to A26. The region spanning E32–V90 is the 4Fe-4S domain. Positions 49, 52, 57, 73, 114, 117, 120, 124, 144, 147, 150, and 154 each coordinate [4Fe-4S] cluster. 4Fe-4S ferredoxin-type domains lie at K105 to K134 and Q135 to V164.

This sequence belongs to the 4Fe4S bacterial-type ferredoxin family. RnfB subfamily. The complex is composed of six subunits: RnfA, RnfB, RnfC, RnfD, RnfE and RnfG. Requires [4Fe-4S] cluster as cofactor.

Its subcellular location is the cell inner membrane. Functionally, part of a membrane-bound complex that couples electron transfer with translocation of ions across the membrane. The sequence is that of Ion-translocating oxidoreductase complex subunit B from Shewanella loihica (strain ATCC BAA-1088 / PV-4).